The chain runs to 892 residues: DNA replication licensing factor mcm6 (892 aa).

2 positions are modified to phosphoserine: S96 and S98. Residues 426–633 (IYSRLTNSLA…VDRHLAKHIV (208 aa)) form the MCM domain. Position 476 to 483 (476 to 483 (GDPSTSKS)) interacts with ATP. The Arginine finger signature appears at 608–611 (SRFD). A compositionally biased stretch (acidic residues) spans 748–758 (EDDAEAQELEN). The disordered stretch occupies residues 748-774 (EDDAEAQELENDNTNTTNGNDNVSSEE). The segment covering 759 to 769 (DNTNTTNGNDN) has biased composition (low complexity).

Belongs to the MCM family. Component of the mcm2-7 complex. The complex forms a toroidal hexameric ring with the proposed subunit order mcm2-mcm6-mcm4-mcm7-mcm3-mcm5. The heterodimers of mcm4/mcm6 and mcm3/mcm5 interact with mcm2 and mcm7. Interacts with sld3.

It is found in the nucleus. It catalyses the reaction ATP + H2O = ADP + phosphate + H(+). In terms of biological role, acts as a component of the mcm2-7 complex (mcm complex) which is the putative replicative helicase essential for 'once per cell cycle' DNA replication initiation and elongation in eukaryotic cells. The active ATPase sites in the mcm2-7 ring are formed through the interaction surfaces of two neighboring subunits such that a critical structure of a conserved arginine finger motif is provided in trans relative to the ATP-binding site of the Walker A box of the adjacent subunit. The six ATPase active sites, however, are likely to contribute differentially to the complex helicase activity. The chain is DNA replication licensing factor mcm6 (mcm6) from Schizosaccharomyces pombe (strain 972 / ATCC 24843) (Fission yeast).